We begin with the raw amino-acid sequence, 235 residues long: Large ribosomal subunit protein uL1 (235 aa).

It belongs to the universal ribosomal protein uL1 family. As to quaternary structure, part of the 50S ribosomal subunit.

Functionally, binds directly to 23S rRNA. The L1 stalk is quite mobile in the ribosome, and is involved in E site tRNA release. Its function is as follows. Protein L1 is also a translational repressor protein, it controls the translation of the L11 operon by binding to its mRNA. The polypeptide is Large ribosomal subunit protein uL1 (Blochmanniella floridana).